The primary structure comprises 115 residues: NADH-ubiquinone oxidoreductase chain 3 (115 aa).

3 helical membrane passes run leucine 3–tryptophan 23, phenylalanine 55–leucine 75, and leucine 86–tryptophan 106.

The protein belongs to the complex I subunit 3 family. Core subunit of respiratory chain NADH dehydrogenase (Complex I) which is composed of 45 different subunits. Interacts with TMEM186. Interacts with TMEM242.

The protein resides in the mitochondrion inner membrane. The enzyme catalyses a ubiquinone + NADH + 5 H(+)(in) = a ubiquinol + NAD(+) + 4 H(+)(out). In terms of biological role, core subunit of the mitochondrial membrane respiratory chain NADH dehydrogenase (Complex I) which catalyzes electron transfer from NADH through the respiratory chain, using ubiquinone as an electron acceptor. Essential for the catalytic activity of complex I. This is NADH-ubiquinone oxidoreductase chain 3 from Lemur catta (Ring-tailed lemur).